The sequence spans 981 residues: Serine/threonine-protein kinase D1044.8 (981 aa).

One can recognise a Protein kinase domain in the interval 453-725; sequence YELLDQLGAG…MCGVRLLEYL (273 aa). Residues 459–467 and K488 contribute to the ATP site; that span reads LGAGAFGCV. The Proton acceptor role is filled by D591. Residues 735–746 show a composition bias toward polar residues; the sequence is TSDMTASQSSYN. 2 disordered regions span residues 735–802 and 823–847; these read TSDM…PSSI and IPSRRRVQTCSTEHPARSSSSTELK. Residues 752-762 are compositionally biased toward low complexity; it reads SPSSLNSSTSS. Positions 830-847 are enriched in polar residues; sequence QTCSTEHPARSSSSTELK.

This sequence belongs to the protein kinase superfamily. NEK Ser/Thr protein kinase family. NIMA subfamily. Requires Mg(2+) as cofactor.

The catalysed reaction is L-seryl-[protein] + ATP = O-phospho-L-seryl-[protein] + ADP + H(+). It carries out the reaction L-threonyl-[protein] + ATP = O-phospho-L-threonyl-[protein] + ADP + H(+). This chain is Serine/threonine-protein kinase D1044.8 (nekl-4), found in Caenorhabditis elegans.